The sequence spans 263 residues: Triosephosphate isomerase (263 aa).

10 to 12 is a substrate binding site; sequence NWK. His104 (electrophile) is an active-site residue. The active-site Proton acceptor is the Glu176. Residues Gly182, Ser221, and 242–243 contribute to the substrate site; that span reads GG.

This sequence belongs to the triosephosphate isomerase family. In terms of assembly, homodimer.

Its subcellular location is the cytoplasm. The enzyme catalyses D-glyceraldehyde 3-phosphate = dihydroxyacetone phosphate. The protein operates within carbohydrate biosynthesis; gluconeogenesis. It participates in carbohydrate degradation; glycolysis; D-glyceraldehyde 3-phosphate from glycerone phosphate: step 1/1. Its function is as follows. Involved in the gluconeogenesis. Catalyzes stereospecifically the conversion of dihydroxyacetone phosphate (DHAP) to D-glyceraldehyde-3-phosphate (G3P). In Haemophilus influenzae (strain ATCC 51907 / DSM 11121 / KW20 / Rd), this protein is Triosephosphate isomerase.